We begin with the raw amino-acid sequence, 312 residues long: Pimeloyl-[acyl-carrier protein] methyl ester esterase (312 aa).

One can recognise an AB hydrolase-1 domain in the interval 17–241 (VYLIHGWGAN…KAAHAPFLSH (225 aa)). Substrate is bound by residues tryptophan 23, 83–84 (SL), and 145–149 (FLQLQ). The active-site Nucleophile is serine 83. Catalysis depends on residues aspartate 207 and histidine 235. Residue histidine 235 coordinates substrate.

Belongs to the AB hydrolase superfamily. Carboxylesterase BioH family. Monomer.

The protein localises to the cytoplasm. It catalyses the reaction 6-carboxyhexanoyl-[ACP] methyl ester + H2O = 6-carboxyhexanoyl-[ACP] + methanol + H(+). It functions in the pathway cofactor biosynthesis; biotin biosynthesis. Functionally, the physiological role of BioH is to remove the methyl group introduced by BioC when the pimeloyl moiety is complete. It allows to synthesize pimeloyl-ACP via the fatty acid synthetic pathway through the hydrolysis of the ester bonds of pimeloyl-ACP esters. This chain is Pimeloyl-[acyl-carrier protein] methyl ester esterase, found in Neisseria meningitidis serogroup A / serotype 4A (strain DSM 15465 / Z2491).